Consider the following 107-residue polypeptide: Ig kappa chain V-VI region NQ5-78.2.6 (107 aa).

The tract at residues 1–23 (QILLTQSPAIMSASPGQKVTMTC) is framework-1. A disulfide bridge links Cys23 with Cys87. The tract at residues 24 to 33 (SASSSVSYMH) is complementarity-determining-1. Positions 34–48 (WYQQKSGTSPKRWIY) are framework-2. A complementarity-determining-2 region spans residues 49-55 (DTSKLAS). The interval 56–87 (GVPARFXGSGSATSYSLTITSMQAEDAATYYC) is framework-3. Residues 88-96 (QQWSSNPLT) form a complementarity-determining-3 region. Positions 97–106 (FGSGTKLEXK) are framework-4.

Functionally, anti-2-phenyl oxazolone (PHOX) Antibody. This Mus musculus (Mouse) protein is Ig kappa chain V-VI region NQ5-78.2.6.